A 530-amino-acid chain; its full sequence is Alpha-(1,3)-fucosyltransferase 4 (530 aa).

2 disordered regions span residues 1–48 (MRRL…RAVP) and 66–112 (HLGG…STPA). Over 1-147 (MRRLWGAARK…GGRRGWRRGR (147 aa)) the chain is Cytoplasmic. The span at 88-106 (ASGERQRRLEPQLQHESRC) shows a compositional bias: basic and acidic residues. Residues 148–172 (GLPWTVCVLAAAGLTCTALITYACW) form a helical; Signal-anchor for type II membrane protein membrane-spanning segment. Residues 173 to 530 (GQLPPLPWAS…IRNLASWFER (358 aa)) lie on the Lumenal side of the membrane. N-linked (GlcNAc...) asparagine glycans are attached at residues asparagine 216 and asparagine 315.

Belongs to the glycosyltransferase 10 family. Expressed at low levels in bone marrow-derived mesenchymal stem cells. In terms of tissue distribution, expressed in cord blood immature promyelocytes and in peripheral blood myeloid and lymphoid cell populations.

The protein localises to the golgi apparatus. The protein resides in the golgi stack membrane. The catalysed reaction is a beta-D-galactosyl-(1-&gt;4)-N-acetyl-beta-D-glucosaminyl derivative + GDP-beta-L-fucose = a beta-D-galactosyl-(1-&gt;4)-[alpha-L-fucosyl-(1-&gt;3)]-N-acetyl-beta-D-glucosaminyl derivative + GDP + H(+). It carries out the reaction an N-acetyl-alpha-neuraminyl-(2-&gt;3)-beta-D-galactosyl-(1-&gt;4)-N-acetyl-beta-D-glucosaminyl derivative + GDP-beta-L-fucose = an alpha-Neu5Ac-(2-&gt;3)-beta-D-Gal-(1-&gt;4)-[alpha-L-Fuc-(1-&gt;3)]-beta-D-GlcNAc derivative + GDP + H(+). It catalyses the reaction an alpha-Neu5Ac-(2-&gt;3)-beta-D-Gal-(1-&gt;4)-beta-D-GlcNAc-(1-&gt;3)-beta-D-Gal-(1-&gt;4)-beta-D-GlcNAc derivative + GDP-beta-L-fucose = an alpha-Neu5Ac-(2-&gt;3)-beta-D-Gal-(1-&gt;4)-beta-D-GlcNAc-(1-&gt;3)-beta-D-Gal-(1-&gt;4)-[alpha-L-Fuc-(1-&gt;3)]-beta-D-GlcNAc derivative + GDP + H(+). The enzyme catalyses an alpha-Neu5Ac-(2-&gt;3)-beta-D-Gal-(1-&gt;4)-beta-D-GlcNAc6S derivative + GDP-beta-L-fucose = an alpha-Neu5Ac-(2-&gt;3)-beta-D-Gal-(1-&gt;4)-[alpha-L-Fuc-(1-&gt;3)]-beta-D-GlcNAc6S derivative + GDP + H(+). It functions in the pathway protein modification; protein glycosylation. Functionally, catalyzes alpha(1-&gt;3) linkage of fucosyl moiety transferred from GDP-beta-L-fucose to N-acetyl glucosamine (GlcNAc) within type 2 lactosamine (LacNAc, Gal-beta(1-&gt;4)GlcNAc) glycan attached to N- or O-linked glycoproteins. Robustly fucosylates nonsialylated distal LacNAc unit of the polylactosamine chain to form Lewis X antigen (CD15), a glycan determinant known to mediate important cellular functions in development and immunity. Fucosylates with lower efficiency sialylated LacNAc acceptors to form sialyl Lewis X and 6-sulfo sialyl Lewis X determinants that serve as recognition epitopes for C-type lectins. Together with FUT7 contributes to SELE, SELL and SELP selectin ligand biosynthesis and selectin-dependent lymphocyte homing, leukocyte migration and blood leukocyte homeostasis. In a cell type specific manner, may also fucosylate the internal LacNAc unit of the polylactosamine chain to form VIM-2 antigen that serves as recognition epitope for SELE. In terms of biological role, does not generate Lewis X antigens. This chain is Alpha-(1,3)-fucosyltransferase 4, found in Homo sapiens (Human).